Here is a 779-residue protein sequence, read N- to C-terminus: Endonuclease MutS2 (779 aa).

328 to 335 (GPNTGGKT) contacts ATP. Positions 704 to 779 (LDLRGKRYEE…GSGATIVTLG (76 aa)) constitute a Smr domain.

It belongs to the DNA mismatch repair MutS family. MutS2 subfamily. In terms of assembly, homodimer. Binds to stalled ribosomes, contacting rRNA.

Functionally, endonuclease that is involved in the suppression of homologous recombination and thus may have a key role in the control of bacterial genetic diversity. Acts as a ribosome collision sensor, splitting the ribosome into its 2 subunits. Detects stalled/collided 70S ribosomes which it binds and splits by an ATP-hydrolysis driven conformational change. Acts upstream of the ribosome quality control system (RQC), a ribosome-associated complex that mediates the extraction of incompletely synthesized nascent chains from stalled ribosomes and their subsequent degradation. Probably generates substrates for RQC. The protein is Endonuclease MutS2 of Streptococcus pyogenes serotype M49 (strain NZ131).